The primary structure comprises 475 residues: Dihydrolipoyl dehydrogenase (475 aa).

FAD contacts are provided by residues 39–47 (EKDAYGGTC), K56, and A118. A disulfide bond links C47 and C52. Residues 186-190 (GGGYI), E209, and 275-278 (AVGR) contribute to the NAD(+) site. D318 and A327 together coordinate FAD. The active-site Proton acceptor is H451.

The protein belongs to the class-I pyridine nucleotide-disulfide oxidoreductase family. In terms of assembly, homodimer. FAD is required as a cofactor.

It localises to the cytoplasm. The enzyme catalyses N(6)-[(R)-dihydrolipoyl]-L-lysyl-[protein] + NAD(+) = N(6)-[(R)-lipoyl]-L-lysyl-[protein] + NADH + H(+). This Haloferax volcanii (strain ATCC 29605 / DSM 3757 / JCM 8879 / NBRC 14742 / NCIMB 2012 / VKM B-1768 / DS2) (Halobacterium volcanii) protein is Dihydrolipoyl dehydrogenase (lpdA).